The sequence spans 37 residues: Large ribosomal subunit protein bL36 (37 aa).

This sequence belongs to the bacterial ribosomal protein bL36 family.

The polypeptide is Large ribosomal subunit protein bL36 (Mycoplasma pneumoniae (strain ATCC 29342 / M129 / Subtype 1) (Mycoplasmoides pneumoniae)).